The sequence spans 190 residues: Large ribosomal subunit protein uL6A (190 aa).

It belongs to the universal ribosomal protein uL6 family. In terms of assembly, component of the large ribosomal subunit (LSU). Mature yeast ribosomes consist of a small (40S) and a large (60S) subunit. The 40S small subunit contains 1 molecule of ribosomal RNA (18S rRNA) and at least 33 different proteins. The large 60S subunit contains 3 rRNA molecules (25S, 5.8S and 5S rRNA) and at least 46 different proteins. uL6 lines the binding pocket for eukaryotic elongation factor 2 (eEF2).

Its subcellular location is the cytoplasm. It localises to the nucleus. Component of the ribosome, a large ribonucleoprotein complex responsible for the synthesis of proteins in the cell. The small ribosomal subunit (SSU) binds messenger RNAs (mRNAs) and translates the encoded message by selecting cognate aminoacyl-transfer RNA (tRNA) molecules. The large subunit (LSU) contains the ribosomal catalytic site termed the peptidyl transferase center (PTC), which catalyzes the formation of peptide bonds, thereby polymerizing the amino acids delivered by tRNAs into a polypeptide chain. The nascent polypeptides leave the ribosome through a tunnel in the LSU and interact with protein factors that function in enzymatic processing, targeting, and the membrane insertion of nascent chains at the exit of the ribosomal tunnel. In Schizosaccharomyces pombe (strain 972 / ATCC 24843) (Fission yeast), this protein is Large ribosomal subunit protein uL6A (rpl901).